The following is a 176-amino-acid chain: Flavodoxin 1 (176 aa).

The 162-residue stretch at 4 to 165 (HGIFFGSDTG…RVEKWVKQIS (162 aa)) folds into the Flavodoxin-like domain.

This sequence belongs to the flavodoxin family. Requires FMN as cofactor.

In terms of biological role, low-potential electron donor to a number of redox enzymes. This chain is Flavodoxin 1 (fldA), found in Shigella flexneri.